Here is a 152-residue protein sequence, read N- to C-terminus: uncharacterized protein (152 aa).

Helical transmembrane passes span 13–33 (LLWF…LLFF), 38–58 (LIVE…SLFM), and 69–89 (WVIF…FFVI).

The protein resides in the cell membrane. This is an uncharacterized protein from Mycoplasma pneumoniae (strain ATCC 29342 / M129 / Subtype 1) (Mycoplasmoides pneumoniae).